Consider the following 292-residue polypeptide: Xyloglucan endotransglucosylase/hydrolase protein A (292 aa).

An N-terminal signal peptide occupies residues 1 to 20; the sequence is MGSSLWTCLILLSLASASFA. The GH16 domain occupies 21 to 219; the sequence is ANPRTPIDVP…WSKAPFIASY (199 aa). Glu-105 (nucleophile) is an active-site residue. The Proton donor role is filled by Glu-109. Glu-109 is a xyloglucan binding site. Asn-113 is a glycosylation site (N-linked (GlcNAc...) asparagine). Xyloglucan is bound by residues 122 to 124, 132 to 134, 198 to 199, and Gly-203; these read QTN, DRE, and DW. Intrachain disulfides connect Cys-227–Cys-236 and Cys-273–Cys-286. Arg-278 is a xyloglucan binding site.

The protein belongs to the glycosyl hydrolase 16 family. XTH group 1 subfamily. Contains at least one intrachain disulfide bond essential for its enzymatic activity. As to expression, predominantly expressed in the phloem fibers of growing internodes. Expressed in xylem cells in the basal part of the internode. In the internode, it is expressed closer to the top of the internode compared to XTHB.

It localises to the secreted. The protein localises to the cell wall. It is found in the extracellular space. The protein resides in the apoplast. The catalysed reaction is breaks a beta-(1-&gt;4) bond in the backbone of a xyloglucan and transfers the xyloglucanyl segment on to O-4 of the non-reducing terminal glucose residue of an acceptor, which can be a xyloglucan or an oligosaccharide of xyloglucan.. Its function is as follows. Catalyzes xyloglucan endohydrolysis (XEH) and/or endotransglycosylation (XET). Cleaves and religates xyloglucan polymers, an essential constituent of the primary cell wall, and thereby participates in cell wall construction of growing tissues. The sequence is that of Xyloglucan endotransglucosylase/hydrolase protein A (XTHA) from Phaseolus angularis (Azuki bean).